A 346-amino-acid chain; its full sequence is Phosphoribosylformylglycinamidine cyclo-ligase (346 aa).

Belongs to the AIR synthase family.

It is found in the cytoplasm. It catalyses the reaction 2-formamido-N(1)-(5-O-phospho-beta-D-ribosyl)acetamidine + ATP = 5-amino-1-(5-phospho-beta-D-ribosyl)imidazole + ADP + phosphate + H(+). It functions in the pathway purine metabolism; IMP biosynthesis via de novo pathway; 5-amino-1-(5-phospho-D-ribosyl)imidazole from N(2)-formyl-N(1)-(5-phospho-D-ribosyl)glycinamide: step 2/2. In Prochlorococcus marinus (strain NATL2A), this protein is Phosphoribosylformylglycinamidine cyclo-ligase.